The chain runs to 427 residues: UPF0229 protein YeaH (427 aa).

The interval 84 to 110 (QSDRIERPQGGGGGSGSGQGQASQDGE) is disordered. Over residues 92 to 102 (QGGGGGSGSGQ) the composition is skewed to gly residues.

Belongs to the UPF0229 family.

The protein is UPF0229 protein YeaH of Escherichia fergusonii (strain ATCC 35469 / DSM 13698 / CCUG 18766 / IAM 14443 / JCM 21226 / LMG 7866 / NBRC 102419 / NCTC 12128 / CDC 0568-73).